The primary structure comprises 301 residues: Protein FdhE homolog (301 aa).

It belongs to the FdhE family.

The protein localises to the cytoplasm. Its function is as follows. Necessary for formate dehydrogenase activity. In Shewanella baltica (strain OS223), this protein is Protein FdhE homolog.